A 2326-amino-acid chain; its full sequence is Nonribosomal peptide synthetase inpB (2326 aa).

The region spanning 8 to 84 is the Carrier 1 domain; that stretch reads SPSEWLQLEL…SLYSMAQGPA (77 aa). An O-(pantetheine 4'-phosphoryl)serine modification is found at Ser45. Positions 87–121 are disordered; that stretch reads ASSSTSDNASDKDSSLDDSETGALTPTTDAGSSLA. The span at 108 to 121 shows a compositional bias: polar residues; sequence GALTPTTDAGSSLA. Positions 144–568 are condensation 1; the sequence is QAVVPCSAIQ…LLSPGEVSQL (425 aa). Residues 593 to 997 are adenylation 1; the sequence is LQPGAAAVNS…GRRDTQVKIR (405 aa). Residues 1145 to 1221 form the Carrier 2 domain; it reads EPSTETEFKL…DLARAVESRV (77 aa). Ser1182 carries the post-translational modification O-(pantetheine 4'-phosphoryl)serine. A disordered region spans residues 1226-1247; the sequence is DEEDPAPFSVWRESRGSEPSEE. A condensation 2 region spans residues 1266–1680; sequence EDVLPCTALQ…LLSPEDVNQL (415 aa). Residues 1702 to 2097 are adenylation 2; it reads EVARSRPGAA…GRIDTQIKIR (396 aa). The Carrier 3 domain maps to 2216 to 2294; that stretch reads PPSTEMEKAL…DLAVLLEKRP (79 aa). An O-(pantetheine 4'-phosphoryl)serine modification is found at Ser2253.

This sequence belongs to the NRP synthetase family.

The protein operates within secondary metabolite biosynthesis. In terms of biological role, nonribosomal peptide synthetase; part of the inp gene cluster that mediates the biosynthesis of fellutamide B, a mycotoxin that acts as a proteasome inhibitor. In the first step of fellutabmide B biosynthesis inpC activates 3-hydroxydodecanoic acid to generate 3-hydroxydodecanoyl-AMP that is then loaded onto the T0 domain of inpB. The 3-hydroxydodecanoyl-S-phosphopantetheinyl-T0 is sequentially extended with L-Asn and L-Gln by the two CAT modules of inpB. The linear lipodipeptide from inpB is then transferred onto inpA for the addition of the third amino acid, L-Leu. Reductive releasing of the lipotripeptide by the TE domain of inpA produces (2S)-fellutamide B. InpF might be involved in the release and transfer of the lipodipeptide from inpB to inpA. The inp cluster-encoded proteasome subunit inpE confers resistance to internally produced fellutamides. The MFS efflux transporter inpD may contribute to fellutamide resistance as well. This chain is Nonribosomal peptide synthetase inpB, found in Emericella nidulans (strain FGSC A4 / ATCC 38163 / CBS 112.46 / NRRL 194 / M139) (Aspergillus nidulans).